Reading from the N-terminus, the 678-residue chain is Zinc finger translocation-associated protein (678 aa).

Disordered regions lie at residues 1 to 100 (MEPG…PGRD), 174 to 250 (GAGG…GSRG), 333 to 413 (LSEL…RDHR), and 493 to 583 (PESP…NYQP). The span at 66-78 (PSSRARGPASSGR) shows a compositional bias: low complexity. A compositionally biased stretch (basic and acidic residues) spans 79–88 (KYSDHCEARA). Acidic residues predominate over residues 187–200 (AEEEEEEDEEEEEG). The span at 205–214 (ACPPKGSGKA) shows a compositional bias: low complexity. Lys-375 is covalently cross-linked (Glycyl lysine isopeptide (Lys-Gly) (interchain with G-Cter in SUMO2)). Residues 493 to 509 (PESPSVPVAPSTASASE) show a composition bias toward low complexity. Composition is skewed to acidic residues over residues 512-524 (GGAE…EEWW) and 539-549 (AEEEDDEDDSQ). Positions 557–572 (PPLPLPPPPPPPPPPP) are enriched in pro residues. Residues 573-583 (RSREQRRNYQP) are compositionally biased toward basic and acidic residues.

This chain is Zinc finger translocation-associated protein, found in Mus musculus (Mouse).